Consider the following 129-residue polypeptide: ALK and LTK ligand 1 (129 aa).

A signal peptide spans methionine 1–glycine 27. Residues glycine 24–alanine 63 are disordered. The segment covering alanine 25–alanine 35 has biased composition (basic residues). 2 disulfide bridges follow: cysteine 90–cysteine 126 and cysteine 104–cysteine 113.

This sequence belongs to the ALKAL family. Widely expressed with highest levels in thyroid and moderate levels in stomach, trachea, small intestine, prostate and brain.

Its subcellular location is the secreted. The protein resides in the cell membrane. Cytokine that acts as a physiological ligand for receptor tyrosine kinase LTK, leading to its activation. Monomeric ALKAL1 binds to LTK, leading to LTK homodimerization and activation. In contrast to ALKAL2, does not act as a potent physiological ligand for ALK. The chain is ALK and LTK ligand 1 from Homo sapiens (Human).